A 308-amino-acid chain; its full sequence is GTPase IMAP family member 5 (308 aa).

The Cytoplasmic portion of the chain corresponds to 1 to 283; the sequence is MEHLQKSTYG…VKSCWSSHTA (283 aa). The region spanning 24–227 is the AIG1-type G domain; that stretch reads SSCLRILLVG…HSNDLFLHAE (204 aa). Residues 33–41, serine 54, 151–153, and asparagine 188 each bind GTP; these read GKSGCGKSA and RKE. The helical; Anchor for type IV membrane protein transmembrane segment at 284–304 threads the bilayer; that stretch reads ACALLIVLGLTLLTTFINLCI. The Mitochondrial intermembrane portion of the chain corresponds to 305-308; sequence SRCK.

The protein belongs to the TRAFAC class TrmE-Era-EngA-EngB-Septin-like GTPase superfamily. AIG1/Toc34/Toc159-like paraseptin GTPase family. IAN subfamily. In terms of assembly, interacts with BAD, BAK1, BAX, BCL2, BCL2L1/Bcl-xL and BCL2L11/BimEL. The interaction with BAX is increased, when cells initiate apoptosis upon IL2 withdrawal. Forms a complex with BCL2L1 or MCL1 and HSPA8/HSC70; the interaction between HSPA8 and BCL2L1 or MCL1 is impaired in the absence of GIMAP5. May interact (via N-terminus) with microtubules. Expressed in thymus (in thymocytes), spleen (in splenocytes), lymph node and lung. Highly expressed in T lymphocytes. Expressed in B cells and in distinct lineages of hematopoietic bone marrow cells, including natural killer, B, T, myeloid and erythroid lineages. Expressed in liver endothelial cells.

Its subcellular location is the lysosome. It localises to the lysosome membrane. It is found in the endosome. The protein resides in the multivesicular body membrane. The protein localises to the endosome membrane. Functionally, plays a role in T lymphocyte development and the optimal generation of CD4/CD8 double-positive thymocytes. Inhibitor of GSK3A. May act by sequestering GSK3A in cytoplasmic vesicles and impairing its translocation to the nucleus. Consequently, impairs GSK3A-dependent transcriptional program and regulation of the DNA damage response occurring during T cells proliferation. Required for the survival of bone marrow hematopoietic stem cells, as well as of peripheral T cells, natural killer (NK) and NK T-cell development and the maintenance of normal liver function. May promote the survival of mature T lymphocytes upon cytokine withdrawal. May regulate Ca(2+) homeostasis by modulating lysosomal Ca(2+) stores, preventing its accumulation in the absence of T cell activation. May play a role in mitochondrial DNA segregation in hematopoietic tissues. Is a regulator of liver endothelial cell homeostasis. The sequence is that of GTPase IMAP family member 5 (Gimap5) from Mus musculus (Mouse).